A 218-amino-acid chain; its full sequence is Ribose-5-phosphate isomerase A (218 aa).

Residues 28-31 (SGST), 81-84 (DGAD), and 94-97 (KGGG) each bind substrate. E103 (proton acceptor) is an active-site residue. K121 provides a ligand contact to substrate.

This sequence belongs to the ribose 5-phosphate isomerase family. In terms of assembly, homodimer.

It catalyses the reaction aldehydo-D-ribose 5-phosphate = D-ribulose 5-phosphate. It participates in carbohydrate degradation; pentose phosphate pathway; D-ribose 5-phosphate from D-ribulose 5-phosphate (non-oxidative stage): step 1/1. In terms of biological role, catalyzes the reversible conversion of ribose-5-phosphate to ribulose 5-phosphate. The sequence is that of Ribose-5-phosphate isomerase A from Dichelobacter nodosus (strain VCS1703A).